Here is a 77-residue protein sequence, read N- to C-terminus: DNA-directed RNA polymerase subunit Rpo5 (77 aa).

This sequence belongs to the archaeal Rpo5/eukaryotic RPB5 RNA polymerase subunit family. In terms of assembly, part of the RNA polymerase complex.

Its subcellular location is the cytoplasm. The catalysed reaction is RNA(n) + a ribonucleoside 5'-triphosphate = RNA(n+1) + diphosphate. Functionally, DNA-dependent RNA polymerase (RNAP) catalyzes the transcription of DNA into RNA using the four ribonucleoside triphosphates as substrates. The chain is DNA-directed RNA polymerase subunit Rpo5 from Methanosphaera stadtmanae (strain ATCC 43021 / DSM 3091 / JCM 11832 / MCB-3).